Here is a 396-residue protein sequence, read N- to C-terminus: Lipid-A-disaccharide synthase (396 aa).

The protein belongs to the LpxB family.

It carries out the reaction a lipid X + a UDP-2-N,3-O-bis[(3R)-3-hydroxyacyl]-alpha-D-glucosamine = a lipid A disaccharide + UDP + H(+). Its pathway is bacterial outer membrane biogenesis; LPS lipid A biosynthesis. Its function is as follows. Condensation of UDP-2,3-diacylglucosamine and 2,3-diacylglucosamine-1-phosphate to form lipid A disaccharide, a precursor of lipid A, a phosphorylated glycolipid that anchors the lipopolysaccharide to the outer membrane of the cell. This chain is Lipid-A-disaccharide synthase, found in Rhodopseudomonas palustris (strain BisB18).